We begin with the raw amino-acid sequence, 188 residues long: Adenylate kinase (188 aa).

Position 10–15 (10–15 (GCGKGT)) interacts with ATP. The interval 30-59 (STGDMLRHARAAGTELGRRVAAIMDGGNLV) is NMP. AMP-binding positions include T31, R36, 57-59 (NLV), 85-88 (GFPR), and Q92. Positions 126–136 (KRAEEEGRPDD) are LID. R127 is a binding site for ATP. Residues R133 and R144 each contribute to the AMP site. G172 provides a ligand contact to ATP.

It belongs to the adenylate kinase family. In terms of assembly, monomer.

It is found in the cytoplasm. The enzyme catalyses AMP + ATP = 2 ADP. The protein operates within purine metabolism; AMP biosynthesis via salvage pathway; AMP from ADP: step 1/1. Catalyzes the reversible transfer of the terminal phosphate group between ATP and AMP. Plays an important role in cellular energy homeostasis and in adenine nucleotide metabolism. The protein is Adenylate kinase of Maricaulis maris (strain MCS10) (Caulobacter maris).